Here is a 262-residue protein sequence, read N- to C-terminus: Nurim (262 aa).

Over 1 to 4 (MAPA) the chain is Nuclear. A helical membrane pass occupies residues 5–28 (LLLVPAALASFILAFGTGVEFVRF). Over 29-58 (TSLRPLLGGIPESGGPDARHGWLAALQDRS) the chain is Perinuclear space. Residues 59–80 (ILASLAWDLCLLLLFVVQHSLM) form a helical membrane-spanning segment. At 81–97 (ATEAVKAWTSRYFGVLQ) the chain is on the nuclear side. Residues 98-114 (RSLYVACTALALQLVMR) form a helical membrane-spanning segment. The Perinuclear space segment spans residues 115 to 133 (YWETTPRGPVLWEARAEPW). The chain crosses the membrane as a helical span at residues 134 to 164 (ATWVPLLCFVLHVVSWLLIFSILLVFDYAEL). Topologically, residues 165–191 (MGLKQVYYHVLGLGEPLSLKSPRALRL) are nuclear. A helical membrane pass occupies residues 192 to 210 (FSHLRHPVCVELLTVLWVV). Residues 211–216 (PTLGTD) are Perinuclear space-facing. Residues 217 to 234 (RLLLALLFTLYLGLAHGL) form a helical membrane-spanning segment. The Nuclear portion of the chain corresponds to 235 to 262 (DQQDLRYLRSQLQRKLHLLSRPQDGEAE).

The protein belongs to the nurim family.

It is found in the nucleus inner membrane. The protein is Nurim (Nrm) of Mus musculus (Mouse).